The chain runs to 49 residues: Lysozyme C (49 aa).

In terms of domain architecture, C-type lysozyme spans 1–49; it reads SKMKKCEFAKIAKEQHMDGYHGVSLADWVCLVNNESDFNTKAINRNKGI. Residue glutamate 35 is part of the active site.

Belongs to the glycosyl hydrolase 22 family. As to quaternary structure, monomer.

It is found in the secreted. The catalysed reaction is Hydrolysis of (1-&gt;4)-beta-linkages between N-acetylmuramic acid and N-acetyl-D-glucosamine residues in a peptidoglycan and between N-acetyl-D-glucosamine residues in chitodextrins.. Functionally, lysozymes have primarily a bacteriolytic function; those in tissues and body fluids are associated with the monocyte-macrophage system and enhance the activity of immunoagents. The sequence is that of Lysozyme C (LYZ) from Pseudocheirus peregrinus (Common ring-tailed possum).